Consider the following 100-residue polypeptide: Urease subunit gamma (100 aa).

It belongs to the urease gamma subunit family. As to quaternary structure, heterotrimer of UreA (gamma), UreB (beta) and UreC (alpha) subunits. Three heterotrimers associate to form the active enzyme.

It is found in the cytoplasm. It catalyses the reaction urea + 2 H2O + H(+) = hydrogencarbonate + 2 NH4(+). It participates in nitrogen metabolism; urea degradation; CO(2) and NH(3) from urea (urease route): step 1/1. This is Urease subunit gamma from Prochlorococcus marinus (strain MIT 9215).